Reading from the N-terminus, the 270-residue chain is NAD kinase (270 aa).

The Proton acceptor role is filled by Asp62. NAD(+) is bound by residues 62-63 (DG), Arg67, 129-130 (ND), Lys140, Asp159, Ile167, 170-175 (TSYSFS), Ala194, and Gln227.

The protein belongs to the NAD kinase family. A divalent metal cation serves as cofactor.

The protein localises to the cytoplasm. The enzyme catalyses NAD(+) + ATP = ADP + NADP(+) + H(+). Involved in the regulation of the intracellular balance of NAD and NADP, and is a key enzyme in the biosynthesis of NADP. Catalyzes specifically the phosphorylation on 2'-hydroxyl of the adenosine moiety of NAD to yield NADP. The sequence is that of NAD kinase from Picrophilus torridus (strain ATCC 700027 / DSM 9790 / JCM 10055 / NBRC 100828 / KAW 2/3).